A 30-amino-acid chain; its full sequence is Chassatide C3 (30 aa).

The cyclopeptide (Gly-Asn) cross-link spans 1 to 30; that stretch reads GIPCGESCVWIPCISSALGCSCKNKVCYRN. 3 disulfides stabilise this stretch: Cys-4–Cys-20, Cys-8–Cys-22, and Cys-13–Cys-27.

Post-translationally, this is a cyclic peptide. As to expression, expressed in fruit, pedicel, stem and root but not in leaf (at protein level).

Its function is as follows. Probably participates in a plant defense mechanism. This is Chassatide C3 from Chassalia chartacea (Chassalia curviflora).